The chain runs to 64 residues: MPKMKSNKSVAARFKLTGSGQLKRTRPGKRHKLSKRSSQQKRNLSKQPLVDQGQVGMYKRMMLV.

The tract at residues 1-55 is disordered; the sequence is MPKMKSNKSVAARFKLTGSGQLKRTRPGKRHKLSKRSSQQKRNLSKQPLVDQGQV. The span at 23–39 shows a compositional bias: basic residues; sequence KRTRPGKRHKLSKRSSQ.

Belongs to the bacterial ribosomal protein bL35 family.

This Chlamydia muridarum (strain MoPn / Nigg) protein is Large ribosomal subunit protein bL35.